A 1335-amino-acid chain; its full sequence is RNA replication protein (1335 aa).

Positions 58–225 (NPYSLKLHPH…EHRYKDLNWL (168 aa)) constitute an Alphavirus-like MT domain. A disordered region spans residues 428 to 492 (GVSSEPTYTE…EEEPQRDDLP (65 aa)). The span at 453-466 (AAEPSATSDEPESS) shows a compositional bias: low complexity. The region spanning 564 to 729 (DVMAGKTGAI…VFGKFSRYHI (166 aa)) is the (+)RNA virus helicase ATP-binding domain. 603-610 (GAGGSGKS) contributes to the ATP binding site. Residues 730 to 863 (NATHRNPRNL…LNKEIKVTEG (134 aa)) enclose the (+)RNA virus helicase C-terminal domain. The region spanning 1102 to 1209 (LPAYTNDFTA…NCRPVERQSF (108 aa)) is the RdRp catalytic domain.

The protein belongs to the potexviruses/carlaviruses RNA replication protein family.

It carries out the reaction RNA(n) + a ribonucleoside 5'-triphosphate = RNA(n+1) + diphosphate. The enzyme catalyses ATP + H2O = ADP + phosphate + H(+). Its function is as follows. RNA replication. The central part of this protein possibly functions as an ATP-binding helicase. The chain is RNA replication protein from Foxtail mosaic virus.